The primary structure comprises 72 residues: Translation initiation factor IF-1 (72 aa).

An S1-like domain is found at 1 to 72; it reads MAKEELLEMR…TKGRITYRFK (72 aa).

This sequence belongs to the IF-1 family. As to quaternary structure, component of the 30S ribosomal translation pre-initiation complex which assembles on the 30S ribosome in the order IF-2 and IF-3, IF-1 and N-formylmethionyl-tRNA(fMet); mRNA recruitment can occur at any time during PIC assembly.

It is found in the cytoplasm. In terms of biological role, one of the essential components for the initiation of protein synthesis. Stabilizes the binding of IF-2 and IF-3 on the 30S subunit to which N-formylmethionyl-tRNA(fMet) subsequently binds. Helps modulate mRNA selection, yielding the 30S pre-initiation complex (PIC). Upon addition of the 50S ribosomal subunit IF-1, IF-2 and IF-3 are released leaving the mature 70S translation initiation complex. The sequence is that of Translation initiation factor IF-1 from Sphingopyxis alaskensis (strain DSM 13593 / LMG 18877 / RB2256) (Sphingomonas alaskensis).